Reading from the N-terminus, the 281-residue chain is Para-Rep C9 (281 aa).

Residues 1 to 95 (MSAVNWVFTL…VAGPWSYGEL (95 aa)) form the CRESS-DNA virus Rep endonuclease domain. An RCR-1 motif is present at residues 7-10 (VFTL). The a divalent metal cation site is built by E33 and H39. The short motif at 39–41 (HIQ) is the RCR-2 element. The short motif at 48–69 (KKAKMNTVKNIIGGNPHLEKMK) is the Nuclear localization signal element. The active-site For DNA cleavage activity is Y78. Residues 78-81 (YAQK) carry the RCR-3 motif. E83 contributes to the a divalent metal cation binding site. The short motif at 95-101 (LLKKGSH) is the Nuclear localization signal element. An ATP-binding site is contributed by 178-180 (GKS).

It belongs to the nanoviridea/circoviridae replication-associated protein family. Homooligomer (Potential). Rep binds to repeated DNA motifs (iterons). Requires Mg(2+) as cofactor. Mn(2+) is required as a cofactor.

It is found in the host nucleus. The enzyme catalyses ATP + H2O = ADP + phosphate + H(+). Its function is as follows. Initiates and terminates the replication only of its own subviral DNA molecule. The closed circular ssDNA genome is first converted to a superhelical dsDNA. Rep binds a specific hairpin at the genome origin of replication. Introduces an endonucleolytic nick within the intergenic region of the genome, thereby initiating the rolling circle replication (RCR). Following cleavage, binds covalently to the 5'-phosphate of DNA as a tyrosyl ester. The cleavage gives rise to a free 3'-OH that serves as a primer for the cellular DNA polymerase. The polymerase synthesizes the (+) strand DNA by rolling circle mechanism. After one round of replication, a Rep-catalyzed nucleotidyl transfer reaction releases a circular single-stranded virus genome, thereby terminating the replication. Displays origin-specific DNA cleavage, nucleotidyl transferase, ATPase and helicase activities. In Faba bean necrotic yellows C9 alphasatellite (FBNYC9A), this protein is Para-Rep C9 (C9).